Consider the following 175-residue polypeptide: Protein SELF-PRUNING (175 aa).

It belongs to the phosphatidylethanolamine-binding protein family.

The protein resides in the cytoplasm. Not known. In plants homozygous for the recessive allele of the SP gene, sympodial segments develop progressively fewer nodes until the shoot is terminated by two consecutive. inflorescences. This is Protein SELF-PRUNING (SP) from Solanum lycopersicum (Tomato).